The primary structure comprises 623 residues: Low affinity potassium transport system protein Kup (623 aa).

The next 12 helical transmembrane spans lie at 10–30, 47–67, 102–122, 138–158, 166–186, 214–234, 248–268, 277–297, 338–358, 364–384, 396–416, and 420–440; these read LSAV…TSPL, PDVV…IVSV, ILVI…VITP, PALD…LFVI, VGKL…LLGL, VSFF…ALYA, WFTV…ALLL, PFFL…ATLA, IYIP…IVGF, LAAA…VLFC, FFVY…FSAN, and LFSG…IMTT.

Belongs to the HAK/KUP transporter (TC 2.A.72) family.

The protein localises to the cell inner membrane. The catalysed reaction is K(+)(in) + H(+)(in) = K(+)(out) + H(+)(out). Responsible for the low-affinity transport of potassium into the cell. Likely operates as a K(+):H(+) symporter. This is Low affinity potassium transport system protein Kup from Yersinia enterocolitica serotype O:8 / biotype 1B (strain NCTC 13174 / 8081).